Consider the following 257-residue polypeptide: Glutamate racemase (257 aa).

Residues 12–13 (DS) and 44–45 (YG) contribute to the substrate site. Catalysis depends on cysteine 75, which acts as the Proton donor/acceptor. Residue 76-77 (NT) participates in substrate binding. Residue cysteine 185 is the Proton donor/acceptor of the active site. Residue 186–187 (TH) coordinates substrate.

This sequence belongs to the aspartate/glutamate racemases family.

The catalysed reaction is L-glutamate = D-glutamate. The protein operates within cell wall biogenesis; peptidoglycan biosynthesis. Functionally, provides the (R)-glutamate required for cell wall biosynthesis. This Clostridium botulinum (strain Langeland / NCTC 10281 / Type F) protein is Glutamate racemase.